The primary structure comprises 170 residues: Urease accessory protein UreE (170 aa).

This sequence belongs to the UreE family.

The protein localises to the cytoplasm. In terms of biological role, involved in urease metallocenter assembly. Binds nickel. Probably functions as a nickel donor during metallocenter assembly. This Helicobacter pylori (strain P12) protein is Urease accessory protein UreE.